A 255-amino-acid chain; its full sequence is S-adenosyl-L-methionine-dependent uroporphyrinogen III methyltransferase (255 aa).

S-adenosyl-L-homocysteine-binding positions include P15, 91–93 (GGD), 121–122 (TS), M175, and A232.

Belongs to the precorrin methyltransferase family. Homodimer.

The enzyme catalyses uroporphyrinogen III + 2 S-adenosyl-L-methionine = precorrin-2 + 2 S-adenosyl-L-homocysteine + H(+). It functions in the pathway porphyrin-containing compound metabolism; siroheme biosynthesis; precorrin-2 from uroporphyrinogen III: step 1/1. Functionally, involved in the archaeal biosynthesis of heme. Catalyzes the methylation of carbons 2 and 7 of uroporphyrinogen-III (UROGEN) to yield precorrin-2. It does not catalyze the overmethylation of precorrin-2 to trimethylpyrrocorphin. The polypeptide is S-adenosyl-L-methionine-dependent uroporphyrinogen III methyltransferase (Methanosarcina barkeri (strain Fusaro / DSM 804)).